A 448-amino-acid chain; its full sequence is Glucose-6-phosphate isomerase (448 aa).

The Proton donor role is filled by glutamate 290. Catalysis depends on residues histidine 311 and lysine 425.

Belongs to the GPI family.

It localises to the cytoplasm. The enzyme catalyses alpha-D-glucose 6-phosphate = beta-D-fructose 6-phosphate. It functions in the pathway carbohydrate biosynthesis; gluconeogenesis. Its pathway is carbohydrate degradation; glycolysis; D-glyceraldehyde 3-phosphate and glycerone phosphate from D-glucose: step 2/4. Its function is as follows. Catalyzes the reversible isomerization of glucose-6-phosphate to fructose-6-phosphate. In Acetivibrio thermocellus (strain ATCC 27405 / DSM 1237 / JCM 9322 / NBRC 103400 / NCIMB 10682 / NRRL B-4536 / VPI 7372) (Clostridium thermocellum), this protein is Glucose-6-phosphate isomerase.